Consider the following 408-residue polypeptide: MVFCGLFSELIKGHSSSNNNGTNVSLAKTIQTNIRSQYSSDLSSYASACKKYSSLKSFDSLLHERTNSIISSLAAQAKTRSLNIESLMEVYGYLLELNQDTVRVIIESKEDVLKNNDLKALVDVYFKSTSKTLDFCNTVEKCVKKAEISQLIIRFAVKQFETETVDTDLGESKKKKYVKTLEEMNKFKAMGDPFDGEFVTQYKSVYDEQVLLLDELRKLKVKLGKKLRNIKTWRILSNVVFATAFVTVFVLSVVAAAMMAPPVLSAVASGLTTPIEVVGMWCNKMWKEYEKAVKRQRGLVLTMELGVQANNVTMVNIKFEVENLSIRISSILKTVNFAVDREENEMATRFAMQEIKKKVEGFTEKIEEVGERAANCSKLIALGRLVVLGHILGLHIVEGGAANIISSV.

The next 2 helical transmembrane spans lie at 239–259 (VVFATAFVTVFVLSVVAAAMM) and 262–282 (PVLSAVASGLTTPIEVVGMWC).

Belongs to the UPF0496 family.

It localises to the membrane. This is UPF0496 protein At5g66670 from Arabidopsis thaliana (Mouse-ear cress).